The chain runs to 272 residues: MADS-box transcription factor 58 (272 aa).

Residues 1-41 (MHIYKEQEAEPSTGLMMPEPAPVASPGSGGSGGSGSVGAEK) are disordered. Over residues 27–36 (GSGGSGGSGS) the composition is skewed to gly residues. The 61-residue stretch at 43–103 (GSRGKIEIKR…GRLYEYSNNS (61 aa)) folds into the MADS-box domain. One can recognise a K-box domain in the interval 129 to 219 (AQHYQQEAAK…KSKVAESERG (91 aa)).

As to expression, expressed in the lodicule, stamen carpel and ovule primordia.

Its subcellular location is the nucleus. Probable transcription factor involved in the development of floral organs. Acts as a C-class protein in association with MADS3. Involved in the control of lodicule number (whorl 2), stamen specification (whorl 3), floral meristem determinacy and regulation of the carpel morphogenesis (whorl 4). Plays a more predominant role in floral meristem determinacy than MADS3. This chain is MADS-box transcription factor 58 (MADS58), found in Oryza sativa subsp. japonica (Rice).